Reading from the N-terminus, the 2442-residue chain is CREB-binding protein (2442 aa).

Disordered regions lie at residues 1 to 41 and 74 to 179; these read MAEN…NDLP and LRGG…CMNA. N-acetylalanine is present on Ala-2. Polar residues predominate over residues 20–30; it reads PGFSANDSTDF. The segment covering 80-90 has biased composition (low complexity); sequence SSINPGIGNVS. Position 121 is a phosphoserine (Ser-121). The segment covering 122-131 has biased composition (polar residues); it reads PLSQGDSSAP. Ser-124 bears the Phosphoserine; by ATM mark. The segment covering 136–150 has biased composition (low complexity); the sequence is QAASTSGPTPAASQA. Over residues 151 to 172 the composition is skewed to polar residues; it reads LNPQAQKQVGLATSSPATSQTG. Residue Arg-220 is modified to Omega-N-methylarginine. The interaction with SRCAP stretch occupies residues 227–410; sequence PTPAMQGASS…GKACQVAHCA (184 aa). The interval 266 to 290 is disordered; sequence KMGITGNTSPFGQPFSQAGGQPMGA. The segment covering 270–284 has biased composition (polar residues); sequence TGNTSPFGQPFSQAG. The TAZ-type 1 zinc-finger motif lies at 347–433; that stretch reads DPEKRKLIQQ…RHDCPVCLPL (87 aa). The Zn(2+) site is built by His-363, Cys-367, Cys-380, Cys-385, His-394, Cys-398, Cys-404, Cys-409, His-418, Cys-422, Cys-427, and Cys-430. Positions 587 to 666 constitute a KIX domain; the sequence is GVRKGWHEHV…KIYKIQKELE (80 aa). Residues Arg-601 and Arg-625 each carry the asymmetric dimethylarginine modification. Residue Lys-657 is modified to N6-acetyllysine. Composition is skewed to polar residues over residues 794 to 805 and 814 to 823; these read LPQNQFPSSSGA and PAQTGVSQGQ. The segment at 794-1083 is disordered; the sequence is LPQNQFPSSS…STSPSQPRKK (290 aa). Pro residues-rich tracts occupy residues 844–860 and 876–885; these read PCPPVTQSPLHPTPPPA and GMTPPQPAAP. Composition is skewed to low complexity over residues 886–929 and 937–952; these read TQPS…VTPQ and PSVATPQSSQQQPTPV. Positions 973-988 are enriched in polar residues; the sequence is PTPSSVASAETNSQQP. Residue Lys-998 forms a Glycyl lysine isopeptide (Lys-Gly) (interchain with G-Cter in SUMO1) linkage. Positions 1011–1021 are enriched in basic and acidic residues; the sequence is GESKGEPRSEM. Lys-1014 is subject to N6-acetyllysine. Residue Ser-1030 is modified to Phosphoserine. Over residues 1032–1059 the composition is skewed to basic and acidic residues; that stretch reads VKEETDIAEQKSEPMEVDEKKPEVKVEV. Glycyl lysine isopeptide (Lys-Gly) (interchain with G-Cter in SUMO1) cross-links involve residues Lys-1033 and Lys-1056. Over residues 1066–1078 the composition is skewed to low complexity; it reads SSNGTASQSTSPS. Residue Ser-1076 is modified to Phosphoserine. A Bromo domain is found at 1085–1192; sequence FKPEELRQAL…EVFEQEIDPV (108 aa). Residues 1124-1170 are interaction with histone; it reads DYFDIVKNPMDLSTIKRKLDTGQYQEPWQYVDDVWLMFNNAWLYNRK. An interaction with ASF1A region spans residues 1162–1180; that stretch reads NNAWLYNRKTSRVYKFCSK. Lys-1216 is modified (N6-acetyllysine). The region spanning 1323-1700 is the CBP/p300-type HAT domain; sequence KFSAKRLQTT…MLVELHTQGQ (378 aa). A phosphoserine; by IKKA mark is found at Ser-1382 and Ser-1386. The interaction with histone stretch occupies residues 1433 to 1435; sequence YLD. Acetyl-CoA contacts are provided by residues 1434 to 1436, 1446 to 1447, Ile-1493, Arg-1498, and Trp-1502; these read LDS and RT. The tract at residues 1460–1891 is interaction with TRERF1; that stretch reads YVKKLGYVTG…LPSPTSAPPG (432 aa). Residues 1556–1568 show a composition bias toward basic and acidic residues; the sequence is LEQEEEERKKEES. Positions 1556–1615 are disordered; it reads LEQEEEERKKEESTAASETTEGSQGDSKNAKKKNNKKTNKNKSSISRANKKKPSMPNVSN. An N6-acetyllysine mark is found at Lys-1583, Lys-1591, Lys-1592, Lys-1595, and Lys-1597. Positions 1585–1595 are enriched in basic residues; it reads AKKKNNKKTNK. Residues 1702–1750 form a ZZ-type zinc finger; that stretch reads RFVYTCNECKHHVETRWHCTVCEDYDLCINCYNTKSHAHKMVKWGLGLD. Cys-1707, Cys-1710, Cys-1720, Cys-1723, Cys-1729, Cys-1732, His-1738, and His-1740 together coordinate Zn(2+). N6-acetyllysine is present on residues Lys-1741 and Lys-1744. A Phosphoserine modification is found at Ser-1763. The TAZ-type 2 zinc-finger motif lies at 1765–1846; it reads QESRRLSIQR…KCPVPFCLNI (82 aa). Disordered regions lie at residues 1874 to 1959 and 1977 to 2028; these read TRNV…VEAA and INNS…PLPQ. The span at 1900-1912 shows a compositional bias: pro residues; sequence PQTPQPPAQPQPS. Polar residues predominate over residues 1925–1940; it reads ARTQPPTTVSTGKPTS. A compositionally biased stretch (pro residues) spans 1943-1954; sequence PAPPPPAQPPPA. Low complexity predominate over residues 2018-2027; it reads PGQWQQAPLP. 3 positions are modified to phosphoserine: Ser-2063, Ser-2076, and Ser-2079. Composition is skewed to low complexity over residues 2112–2137, 2146–2160, 2196–2219, 2228–2263, and 2294–2305; these read QPGMQPQPGLQSQPGMQPQPGMHQQP, QAGVPRPGVPPQQQA, QLLQQQQQQQQQQQQQQQQQQGSA, HGQFQQPQGPGGYPPAMQQQQRMQQHLPLQGSSMGQ, and RILQQQQMKQQI. 2 disordered regions span residues 2112–2263 and 2294–2433; these read QPGM…SMGQ and RILQ…TTGD. Composition is skewed to polar residues over residues 2315–2327 and 2334–2343; these read SPQQHMLSGQPQA and QIATSLSNQV. The span at 2349 to 2372 shows a compositional bias: pro residues; the sequence is VQSPRPQSQPPHSSPSPRIQPQPS. Phosphoserine is present on Ser-2351. Residues 2411 to 2424 show a composition bias toward polar residues; the sequence is QLNTPSRSALSSEL.

Found in a complex containing NCOA2; NCOA3; IKKA; IKKB and IKBKG. Probably part of a complex with HIF1A and EP300. Interacts with GATA1; the interaction results in acetylation and enhancement of transcriptional activity of GATA1. Interacts with MAF and ZCCHC12. Interacts with DAXX; the interaction is dependent on CBP sumoylation and results in suppression of the transcriptional activity via recruitment of HDAC2 to DAXX. Interacts with phosphorylated CREB1. Interacts with CITED4 (C-terminal region). Interacts (via the TAZ-type 1 domain) with HIF1A. Interacts with SRCAP, CARM1, ELF3, MLLT7/FOXO4, N4BP2, NCOA1, NCOA3, NCOA6, PCAF, DDX5, DDX17, PELP1, PML, SMAD1, SMAD2, SMAD3, SPIB and TRERF1. Interacts with KLF1; the interaction results in acetylation of KLF1 and enhancement of its transcriptional activity. Interacts with MTDH. Interacts with NFATC4. Interacts with MAFG; the interaction acetylates MAFG in the basic region and stimulates NFE2 transcriptional activity through increasing its DNA-binding activity. Interacts with IRF2; the interaction acetylates IRF2 and regulates its activity on the H4 promoter. Interacts with IRF3 (when phosphorylated); forming the dsRNA-activated factor 1 (DRAF1), a complex which activates the transcription of the type I interferon genes. Interacts (via N-terminus) with SS18L1/CREST (via C-terminus). Interacts with MECOM. Interacts with CITED1 (via C-terminus). Interacts with FOXO1; the interaction acetylates FOXO1 and inhibits its transcriptional activity. Interacts with NPAS2, CLOCK and BMAL1. Interacts with ASF1A and ASF1B; this promotes histone acetylation. Interacts with acetylated TP53/p53 and with the acetylated histones H3 and H4. Interacts (via transactivation domain and C-terminus) with PCNA; the interaction occurs on chromatin in UV-irradiated damaged cells. Interacts with DHX9 (via N-terminus); this interaction mediates association with RNA polymerase II holoenzyme and stimulates CREB-dependent transcriptional activation. Interacts with SMAD4; negatively regulated by ZBTB7A. Interacts with DUX4 (via C-terminus). Forms a complex with KMT2A and CREB1. Interacts with DDX3X; this interaction may facilitate HNF4A acetylation. Interacts with MSX1; the interaction may inhibit MSX1 autoinactivation. Interacts with ACSS2. As to quaternary structure, (Microbial infection) Interacts with HTLV-1 Tax, p30II and HBZ. In terms of assembly, (Microbial infection) Interacts with human herpes virus 8/HHV-8 protein vIRF-1; this interaction inhibits CREBBP binding to IRF3. (Microbial infection) Interacts with HIV-1 Tat. Post-translationally, methylation of the KIX domain by CARM1 blocks association with CREB. This results in the blockade of CREB signaling, and in activation of apoptotic response. In terms of processing, phosphorylated by CHUK/IKKA at Ser-1382 and Ser-1386; these phosphorylations promote cell growth by switching the binding preference of CREBBP from TP53 to NF-kappa-B. Phosphorylated by _ at Ser-124 in response to DNA damage, promoting interaction with MRE11 and lactylation of MRE11. Sumoylation negatively regulates transcriptional activity via the recruitment of DAAX. Post-translationally, autoacetylation is required for binding to protein substrates, such as acetylated histones and acetylated TP53/p53. Autoacetylation is induced by glucose and fatty acids.

The protein resides in the cytoplasm. It localises to the nucleus. It carries out the reaction L-lysyl-[histone] + acetyl-CoA = N(6)-acetyl-L-lysyl-[histone] + CoA + H(+). The enzyme catalyses L-lysyl-[protein] + acetyl-CoA = N(6)-acetyl-L-lysyl-[protein] + CoA + H(+). The catalysed reaction is (S)-lactoyl-CoA + L-lysyl-[protein] = N(6)-[(S)-lactoyl]-L-lysyl-[protein] + CoA + H(+). Functionally, acetylates histones, giving a specific tag for transcriptional activation. Mediates acetylation of histone H3 at 'Lys-18' and 'Lys-27' (H3K18ac and H3K27ac, respectively). Also acetylates non-histone proteins, like DDX21, FBL, IRF2, MAFG, NCOA3, POLR1E/PAF53 and FOXO1. Binds specifically to phosphorylated CREB and enhances its transcriptional activity toward cAMP-responsive genes. Acts as a coactivator of ALX1. Acts as a circadian transcriptional coactivator which enhances the activity of the circadian transcriptional activators: NPAS2-BMAL1 and CLOCK-BMAL1 heterodimers. Acetylates PCNA; acetylation promotes removal of chromatin-bound PCNA and its degradation during nucleotide excision repair (NER). Acetylates POLR1E/PAF53, leading to decreased association of RNA polymerase I with the rDNA promoter region and coding region. Acetylates DDX21, thereby inhibiting DDX21 helicase activity. Acetylates FBL, preventing methylation of 'Gln-105' of histone H2A (H2AQ104me). In addition to protein acetyltransferase, can use different acyl-CoA substrates, such as lactoyl-CoA, and is able to mediate protein lactylation. Catalyzes lactylation of MRE11 in response to DNA damage, thereby promoting DNA double-strand breaks (DSBs) via homologous recombination (HR). Functions as a transcriptional coactivator for SMAD4 in the TGF-beta signaling pathway. In Homo sapiens (Human), this protein is CREB-binding protein.